Reading from the N-terminus, the 1051-residue chain is Putative transcription factor SEF1 (1051 aa).

Residues 1–10 are compositionally biased toward basic and acidic residues; the sequence is MSTDVSERGA. 2 disordered regions span residues 1–54 and 67–90; these read MSTD…SEES and GQASPDRSKVSKQQNGASGHRPVT. The span at 11-21 shows a compositional bias: low complexity; it reads EAGSSSGLLSS. The zn(2)-C6 fungal-type DNA-binding region spans 92-122; that stretch reads CTHCRQHKIKCNASENFPSSCSRCERMGLQC. The span at 206–218 shows a compositional bias: low complexity; it reads SSVKSSVNTPSGS. Disordered stretches follow at residues 206-227, 738-759, and 927-968; these read SSVKSSVNTPSGSYSASAVDVS, EKNRKEQPVHTAATGSQDTEKR, and ASGN…QPAP.

It is found in the nucleus. In terms of biological role, putative transcription factor. This is Putative transcription factor SEF1 (SEF1) from Eremothecium gossypii (strain ATCC 10895 / CBS 109.51 / FGSC 9923 / NRRL Y-1056) (Yeast).